A 447-amino-acid chain; its full sequence is MSYSVLEALRNNPDHVRKVLAARRLDVSLVDRFIELDGRWRQLKREVDELRRSYNQLSREGARAPPDRRREIVEKARELAARLEKVEKEMEAVEREREELLWSFPNLIHDSVPVCPEGVDSVPVRHWGTIRVVKGAAAPEGVEYVVVEKPPVGHADMAEVVLGMADTLKAGEVAGSRFYYLFDDLVWLDFALAMYALDRLAQQGFRPVVPPYMLKFDVIRRVLDFDTFKDAIYKIEGEDLYLIATAEHGIAAYLHKRELVEEELPLLFVGWSPCFRKEAGAGNRDLKGIFRVHIFHKVEQFVFSLPEDSWKWHEEITKNTESLIRDLGLPYRVVNICAHDLGAPAAKKYDIEAWYPAQGMYRELASCSNVTDWQSYRLGIRVTRKGMRREFVHTLNCTGLATTRTITAILENFQREDGAVEIPKALRPYLEPIRAAPKEYIYPRRRG.

245–247 (TAE) contacts L-serine. ATP is bound by residues 276 to 278 (RKE) and V292. E299 is a binding site for L-serine. 363–366 (ELAS) is an ATP binding site. T398 is an L-serine binding site.

Belongs to the class-II aminoacyl-tRNA synthetase family. Type-1 seryl-tRNA synthetase subfamily. Homodimer. The tRNA molecule binds across the dimer.

It is found in the cytoplasm. The catalysed reaction is tRNA(Ser) + L-serine + ATP = L-seryl-tRNA(Ser) + AMP + diphosphate + H(+). It carries out the reaction tRNA(Sec) + L-serine + ATP = L-seryl-tRNA(Sec) + AMP + diphosphate + H(+). It participates in aminoacyl-tRNA biosynthesis; selenocysteinyl-tRNA(Sec) biosynthesis; L-seryl-tRNA(Sec) from L-serine and tRNA(Sec): step 1/1. Catalyzes the attachment of serine to tRNA(Ser). Is also able to aminoacylate tRNA(Sec) with serine, to form the misacylated tRNA L-seryl-tRNA(Sec), which will be further converted into selenocysteinyl-tRNA(Sec). This chain is Serine--tRNA ligase, found in Pyrobaculum neutrophilum (strain DSM 2338 / JCM 9278 / NBRC 100436 / V24Sta) (Thermoproteus neutrophilus).